A 546-amino-acid chain; its full sequence is Chaperonin GroEL 1 (546 aa).

Residues 29–32 (TLGP), 86–90 (DGTTT), Gly-414, and Asp-499 each bind ATP.

Belongs to the chaperonin (HSP60) family. In terms of assembly, forms a cylinder of 14 subunits composed of two heptameric rings stacked back-to-back. Interacts with the co-chaperonin GroES.

It localises to the cytoplasm. It carries out the reaction ATP + H2O + a folded polypeptide = ADP + phosphate + an unfolded polypeptide.. Its function is as follows. Together with its co-chaperonin GroES, plays an essential role in assisting protein folding. The GroEL-GroES system forms a nano-cage that allows encapsulation of the non-native substrate proteins and provides a physical environment optimized to promote and accelerate protein folding. The polypeptide is Chaperonin GroEL 1 (Roseiflexus sp. (strain RS-1)).